A 130-amino-acid polypeptide reads, in one-letter code: Sulfurtransferase TusD (130 aa).

C80 serves as the catalytic Cysteine persulfide intermediate.

This sequence belongs to the DsrE/TusD family. Heterohexamer, formed by a dimer of trimers. The hexameric TusBCD complex contains 2 copies each of TusB, TusC and TusD. The TusBCD complex interacts with TusE.

It is found in the cytoplasm. Its function is as follows. Part of a sulfur-relay system required for 2-thiolation of 5-methylaminomethyl-2-thiouridine (mnm(5)s(2)U) at tRNA wobble positions. Accepts sulfur from TusA and transfers it in turn to TusE. The chain is Sulfurtransferase TusD from Proteus mirabilis (strain HI4320).